A 210-amino-acid polypeptide reads, in one-letter code: Na(+)-translocating NADH-quinone reductase subunit D (210 aa).

The next 6 membrane-spanning stretches (helical) occupy residues 10-30 (ILFAPFLDNNPIALQVLGVCS), 42-62 (FVMTLAVMFVTAFSNLFVSLI), 72-92 (IIVQMAIIASLVIVVDQVLKA), 103-123 (VFVGLIITNCIVMGRAEAYAM), 131-151 (FIDGVGNGLGYGFVLITVAFF), and 178-198 (NGLMLLAPSAFFLIGFMIWAI).

It belongs to the NqrDE/RnfAE family. In terms of assembly, composed of six subunits; NqrA, NqrB, NqrC, NqrD, NqrE and NqrF.

The protein localises to the cell inner membrane. It catalyses the reaction a ubiquinone + n Na(+)(in) + NADH + H(+) = a ubiquinol + n Na(+)(out) + NAD(+). NQR complex catalyzes the reduction of ubiquinone-1 to ubiquinol by two successive reactions, coupled with the transport of Na(+) ions from the cytoplasm to the periplasm. NqrA to NqrE are probably involved in the second step, the conversion of ubisemiquinone to ubiquinol. In Photobacterium profundum (strain SS9), this protein is Na(+)-translocating NADH-quinone reductase subunit D.